The chain runs to 274 residues: Prolyl 4-hydroxylase 13 (274 aa).

Over M1 to L10 the chain is Cytoplasmic. Residues V11 to F31 form a helical; Signal-anchor for type II membrane protein membrane-spanning segment. Topologically, residues N32–D274 are lumenal. Residues Y151 to D270 enclose the Fe2OG dioxygenase domain. 2 residues coordinate Fe cation: H169 and D171. The N-linked (GlcNAc...) asparagine glycan is linked to N242. Residue H251 participates in Fe cation binding. Position 261 (K261) interacts with 2-oxoglutarate.

It belongs to the P4HA family. Fe(2+) serves as cofactor. L-ascorbate is required as a cofactor. Expressed in epidermal root hair cells (trichoblasts) root hairless cells (atrichoblasts).

The protein resides in the endoplasmic reticulum membrane. It carries out the reaction L-prolyl-[collagen] + 2-oxoglutarate + O2 = trans-4-hydroxy-L-prolyl-[collagen] + succinate + CO2. In terms of biological role, catalyzes the post-translational formation of 4-hydroxyproline in -Xaa-Pro-Gly- sequences in proline-rich peptide sequences of plant glycoproteins and other proteins. Hydroxyprolines are important constituent of many plant cell wall glycoproteins such as extensins, hydroxyproline-rich glycoproteins, lectins and arabinogalactan proteins. Possesses high affinity for leucine-rich repeat and proline-rich extensins of root cell walls that are essential for root hair development. Hydroxyprolines define the subsequent O-glycosylation sites by arabinosyltransferases which elongate the O-arabinosides on extensins. The polypeptide is Prolyl 4-hydroxylase 13 (Arabidopsis thaliana (Mouse-ear cress)).